We begin with the raw amino-acid sequence, 201 residues long: Retinol-binding protein 4 (201 aa).

Residues 1–18 form the signal peptide; that stretch reads MEWVWALVLLAALGSGRG. Intrachain disulfides connect cysteine 22–cysteine 178, cysteine 88–cysteine 192, and cysteine 138–cysteine 147. Glutamine 116 serves as a coordination point for substrate. Residue arginine 139 is modified to Omega-N-methylarginine.

It belongs to the calycin superfamily. Lipocalin family. In terms of assembly, interacts with TTR. Interaction with TTR prevents its loss by filtration through the kidney glomeruli. Interacts with STRA6.

Its subcellular location is the secreted. In terms of biological role, retinol-binding protein that mediates retinol transport in blood plasma. Delivers retinol from the liver stores to the peripheral tissues. Transfers the bound all-trans retinol to STRA6, that then facilitates retinol transport across the cell membrane. This chain is Retinol-binding protein 4 (RBP4), found in Oryctolagus cuniculus (Rabbit).